The sequence spans 341 residues: DNA-directed RNA polymerase subunit alpha (341 aa).

An alpha N-terminal domain (alpha-NTD) region spans residues 1 to 233 (MIQDEVPVSA…DLFLPFLHTE (233 aa)). Positions 262-341 (DRMAKEVAFK…NLPRNKFSID (80 aa)) are alpha C-terminal domain (alpha-CTD).

This sequence belongs to the RNA polymerase alpha chain family. In plastids the minimal PEP RNA polymerase catalytic core is composed of four subunits: alpha, beta, beta', and beta''. When a (nuclear-encoded) sigma factor is associated with the core the holoenzyme is formed, which can initiate transcription.

Its subcellular location is the plastid. It localises to the chloroplast. It carries out the reaction RNA(n) + a ribonucleoside 5'-triphosphate = RNA(n+1) + diphosphate. Functionally, DNA-dependent RNA polymerase catalyzes the transcription of DNA into RNA using the four ribonucleoside triphosphates as substrates. In Angiopteris evecta (Mule's foot fern), this protein is DNA-directed RNA polymerase subunit alpha.